The chain runs to 150 residues: 3-dehydroquinate dehydratase (150 aa).

Tyr-26 acts as the Proton acceptor in catalysis. Positions 77, 83, and 90 each coordinate substrate. His-103 serves as the catalytic Proton donor. Substrate is bound by residues Leu-104–Ser-105 and Arg-114.

Belongs to the type-II 3-dehydroquinase family. Homododecamer.

It carries out the reaction 3-dehydroquinate = 3-dehydroshikimate + H2O. It functions in the pathway metabolic intermediate biosynthesis; chorismate biosynthesis; chorismate from D-erythrose 4-phosphate and phosphoenolpyruvate: step 3/7. Its function is as follows. Catalyzes a trans-dehydration via an enolate intermediate. In Photobacterium profundum (strain SS9), this protein is 3-dehydroquinate dehydratase.